Consider the following 500-residue polypeptide: Melanopsin-like (500 aa).

Topologically, residues 1 to 65 (MSHHSSWRGH…TVDVPDHAHY (65 aa)) are extracellular. N18 is a glycosylation site (N-linked (GlcNAc...) asparagine). Residues 66–86 (IIGSVILIVGITGVIGNALVV) traverse the membrane as a helical segment. The Cytoplasmic segment spans residues 87-101 (YVFCRSRTLRTAGNM). A helical transmembrane segment spans residues 102–122 (FIVNLAVADFLMSVTQSPVFF). The Extracellular segment spans residues 123–138 (AASLHRRWVFGERPCE). Residues C137 and C215 are joined by a disulfide bond. The chain crosses the membrane as a helical span at residues 139 to 159 (LYAFCGALFGICSMMTLTAIA). Residues 160–182 (ADRCLAITQPLALVSRVSRRKAG) lie on the Cytoplasmic side of the membrane. Residues 183-203 (AVLVVVWLYSLGWSLPPFFGW) traverse the membrane as a helical segment. The Extracellular portion of the chain corresponds to 204-232 (SAYVPEGLQTSCSWDYMTFTPSVRAYTIL). A helical membrane pass occupies residues 233-253 (LFVFVFFIPLGIIGSCYFAIF). At 254–286 (QTIRAAGKEIRELDCGETHKVYERMQNEWKMAK) the chain is on the cytoplasmic side. Residues 287–307 (VALVVIVLFIISWSPYSVVAL) traverse the membrane as a helical segment. Topologically, residues 308–322 (TATAGYSHFLTPYMN) are extracellular. Residues 323-343 (SVPAVIAKASAIHNPIIYAIT) form a helical membrane-spanning segment. K330 bears the N6-(retinylidene)lysine mark. Over 344–500 (HPKYRVAIAR…SDGKALLGGN (157 aa)) the chain is Cytoplasmic. Residues 404-428 (RWGKTRLSSASDSDSCWTESEADGS) form a disordered region. The span at 409 to 428 (RLSSASDSDSCWTESEADGS) shows a compositional bias: polar residues.

Belongs to the G-protein coupled receptor 1 family. Opsin subfamily. In terms of tissue distribution, expressed in a subset of retinal horizontal cells.

It is found in the cell membrane. In terms of biological role, photoreceptor implicated in non-image-forming responses to light. In Danio rerio (Zebrafish), this protein is Melanopsin-like (opn4l).